Here is a 234-residue protein sequence, read N- to C-terminus: UPF0173 metal-dependent hydrolase RHE_CH01853 (234 aa).

This sequence belongs to the UPF0173 family.

The chain is UPF0173 metal-dependent hydrolase RHE_CH01853 from Rhizobium etli (strain ATCC 51251 / DSM 11541 / JCM 21823 / NBRC 15573 / CFN 42).